The following is a 465-amino-acid chain: ATP synthase subunit beta (465 aa).

Residue 155-162 (GGAGVGKT) coordinates ATP.

It belongs to the ATPase alpha/beta chains family. As to quaternary structure, F-type ATPases have 2 components, CF(1) - the catalytic core - and CF(0) - the membrane proton channel. CF(1) has five subunits: alpha(3), beta(3), gamma(1), delta(1), epsilon(1). CF(0) has three main subunits: a(1), b(2) and c(9-12). The alpha and beta chains form an alternating ring which encloses part of the gamma chain. CF(1) is attached to CF(0) by a central stalk formed by the gamma and epsilon chains, while a peripheral stalk is formed by the delta and b chains.

It localises to the cell membrane. The catalysed reaction is ATP + H2O + 4 H(+)(in) = ADP + phosphate + 5 H(+)(out). Functionally, produces ATP from ADP in the presence of a proton gradient across the membrane. The catalytic sites are hosted primarily by the beta subunits. The protein is ATP synthase subunit beta of Buchnera aphidicola subsp. Baizongia pistaciae (strain Bp).